Reading from the N-terminus, the 88-residue chain is FXYD domain-containing ion transport regulator 4 (88 aa).

The signal sequence occupies residues 1–20 (MEEITCAFLLLLAGLPALEA). At 21 to 38 (SDPVDKDSPFYYDWESLQ) the chain is on the extracellular side. Residues 39 to 59 (LGGLIFGGLLCIAGIAMALSG) traverse the membrane as a helical segment. At 60 to 88 (KCKCRRTHKPSSLPGKATPLIIPGSANTC) the chain is on the cytoplasmic side.

This sequence belongs to the FXYD family. As to quaternary structure, regulatory subunit of the sodium/potassium-transporting ATPase which is composed of a catalytic alpha subunit, a non-catalytic beta subunit and a regulatory subunit. The regulatory subunit, a member of the FXYD protein family, modulates the enzymatic activity in a tissue- and isoform-specific way by changing affinities of the Na+/K+-ATPase toward Na(+), K(+) or ATP.

It localises to the cell membrane. Its subcellular location is the basolateral cell membrane. Its function is as follows. Associates with and regulates the activity of the sodium/potassium-transporting ATPase (NKA) which catalyzes the hydrolysis of ATP coupled with the exchange of Na(+) and K(+) ions across the plasma membrane. Increases the apparent affinity of the transporter for Na(+) and increases NKA activity. This Mus musculus (Mouse) protein is FXYD domain-containing ion transport regulator 4 (Fxyd4).